The following is a 142-amino-acid chain: Maximins y/Hv type 1 (142 aa).

Positions 1-18 (MNFKYIVAVSFLIASGYA) are cleaved as a signal peptide. Positions 19–43 (RSEENDVQSLSQREVLEEESLREIR) are excised as a propeptide. At Phe-68 the chain carries Phenylalanine amide. A propeptide spanning residues 72 to 121 (TAEDHEVMKRLEAVMRDLDSLDHPEEASERETRGFNQEEIANLFTKKEKR) is cleaved from the precursor. The residue at position 141 (Ile-141) is an Isoleucine amide.

It belongs to the bombinin family. In terms of tissue distribution, expressed by the skin glands.

The protein resides in the secreted. Functionally, maximin-y shows antimicrobial activity against bacteria and against the fungus C.albicans. It has little hemolytic activity. Maximin-Hv shows antimicrobial activity against bacteria and against the fungus C.albicans. Shows strong hemolytic activity. This Bombina maxima (Giant fire-bellied toad) protein is Maximins y/Hv type 1.